Reading from the N-terminus, the 142-residue chain is UPF0179 protein PYRAB06360 (142 aa).

It belongs to the UPF0179 family.

The chain is UPF0179 protein PYRAB06360 from Pyrococcus abyssi (strain GE5 / Orsay).